Here is a 360-residue protein sequence, read N- to C-terminus: Peptide chain release factor 1 (360 aa).

Glutamine 235 is subject to N5-methylglutamine. Residues 285 to 311 form a disordered region; the sequence is KRQQAQASERRNLLGSGDRSDRHRTYN. A compositionally biased stretch (basic and acidic residues) spans 292–308; it reads SERRNLLGSGDRSDRHR.

It belongs to the prokaryotic/mitochondrial release factor family. Post-translationally, methylated by PrmC. Methylation increases the termination efficiency of RF1.

It localises to the cytoplasm. Functionally, peptide chain release factor 1 directs the termination of translation in response to the peptide chain termination codons UAG and UAA. The protein is Peptide chain release factor 1 of Hamiltonella defensa subsp. Acyrthosiphon pisum (strain 5AT).